A 140-amino-acid chain; its full sequence is L-fucose mutarotase (140 aa).

His-22 (proton donor) is an active-site residue. Residues Asp-30, Arg-107, and 129–131 (YGN) each bind substrate.

This sequence belongs to the RbsD / FucU family. FucU mutarotase subfamily. In terms of assembly, homodecamer.

It is found in the cytoplasm. It catalyses the reaction alpha-L-fucose = beta-L-fucose. Its pathway is carbohydrate metabolism; L-fucose metabolism. In terms of biological role, involved in the anomeric conversion of L-fucose. The sequence is that of L-fucose mutarotase from Salmonella paratyphi B (strain ATCC BAA-1250 / SPB7).